Reading from the N-terminus, the 282-residue chain is Transcription repressor OFP18 (282 aa).

The interval 1 to 85 (MVRKMKLPFL…YSSFSSTSHA (85 aa)) is disordered. Residues 15–35 (SSSSFSSNSSSSSSSWPWPSS) show a composition bias toward low complexity. Over residues 36 to 47 (HQQNLKTISSKA) the composition is skewed to polar residues. Low complexity predominate over residues 66–85 (SFSSSPSSSSYSSFSSTSHA). The OVATE domain maps to 139 to 199 (LSLESNDPYT…FAAFVDLVLN (61 aa)).

As to expression, expressed in roots and shoots.

It localises to the nucleus. Its function is as follows. Transcriptional repressor that regulates multiple aspects of plant growth and development through the regulation of BEL1-LIKE (BLH) and KNOX TALE (KNAT) homeodomain transcription factors. This Arabidopsis thaliana (Mouse-ear cress) protein is Transcription repressor OFP18 (OFP18).